The primary structure comprises 555 residues: MATRPPLSPPVNETEHSVSRITREGKRITYKLNVMQQPERARACGAGAKSSADRRPVDPPPVVELRIFESDPNDDVHKTDITFAYNANFFLFATLETARPMAQGRLAPTPTFPVLTGVPVAGVAYLDRPSQAGYFIFPDLSVRHEGIYRLSFHLYEETKDSKDADESAPIRSPMMKGKPSIPKSFLNFRLEVVSVPFTVFSAKKFPGLTTSTSLSRIIAEQGCRVRIRRDVRMRRRGDKRSDDYDFDEERSHRGRIPDRYSTPDAYANPVERPRSTSIGSVDPAFSYGPEASRRPSATEYGFSNPQAYPRAIPPAPAPAPPSSSTPTPVAPIAPSRSSSYTSHLSFGATRTQYPAPQLPGTPQSATTPTQVYSPHPTYTHARNPSTSTEYEPMPSGYPPSRLPAERSTYSKPLPPIRVLHHSDPTTYRAMANPVPPRAQTPSNAAPSLPPIASISAEYSNNLPQPPSNLAPSPNREPRGFLWDTRAAASSKRPHEDAFSHSERPLYNGMRPDNDSYPSADRRPSDVHRATLLSDRDEMAYKRANGRMATKISPAI.

3 disordered regions span residues 1-23, 39-60, and 234-533; these read MATRPPLSPPVNETEHSVSRITR, ERARACGAGAKSSADRRPVDPP, and RRRG…TLLS. Basic and acidic residues predominate over residues 13-23; the sequence is ETEHSVSRITR. The region spanning 25 to 228 is the Velvet domain; it reads GKRITYKLNV…AEQGCRVRIR (204 aa). Positions 39–44 match the Nuclear localization signal motif; it reads ERARAC. The segment covering 239-258 has biased composition (basic and acidic residues); that stretch reads KRSDDYDFDEERSHRGRIPD. Residues 311–331 show a composition bias toward pro residues; sequence AIPPAPAPAPPSSSTPTPVAP. Polar residues-rich tracts occupy residues 336-372 and 380-389; these read RSSSYTSHLSFGATRTQYPAPQLPGTPQSATTPTQVY and HARNPSTSTE. The tract at residues 439–479 is PEST; that stretch reads QTPSNAAPSLPPIASISAEYSNNLPQPPSNLAPSPNREPRG. Composition is skewed to basic and acidic residues over residues 492–503 and 519–533; these read RPHEDAFSHSER and ADRRPSDVHRATLLS.

Belongs to the velvet family. VeA subfamily. Component of the heterotrimeric velvet complex composed of laeA, veA and velB; VeA acting as a bridging protein between laeA and velB.

It is found in the nucleus. The protein localises to the cytoplasm. Component of the velvet transcription factor complex that controls sexual/asexual developmental ratio in response to light, promoting sexual development in the darkness while stimulating asexual sporulation under illumination. The velvet complex hat acts as a global regulator for secondary metabolite gene expression. Increases spore dispersing capacity by impacting conidiophore architecture. This Aspergillus niger (strain ATCC 1015 / CBS 113.46 / FGSC A1144 / LSHB Ac4 / NCTC 3858a / NRRL 328 / USDA 3528.7) protein is Developmental and secondary metabolism regulator veA.